The following is a 406-amino-acid chain: MSLIRVNGEAFKLSLESLEEDPFETKETLETLVKQTSVVLLAAGESRRFSQTIKKQWLRSNHTPLWLSVYESFKKALDFKEILLVVSELDYIYIKRHYPEIKLVKGGASRQESVRNALKIIDSAYTLTSDAARGLANIEALKSLFLTLQQTNHYCIAPYLPCYDTAIYYNEALDREAIKLIQTPQLSHTKTLQSALNQGDFKDESSAILQAFPNRVSYIEGSKNLHKLTTSDDLKHFAFFFNPAKDTFIGMGFDTHAFIKDKPMVLGGVVLDCEFGLKAHSDGDALLHAVIDAVLGAIKGGDIGEWFPDNDPKYKNASSKELLKVVLDFSQSIGFELLEMGATIFSEIPKITPYKPAILESLSQLLGLEKSQISLKATTMEKMGFIGKQEGLLVQAHVSMRYKQKL.

The tract at residues 1–247 (MSLIRVNGEA…AFFFNPAKDT (247 aa)) is 2-C-methyl-D-erythritol 4-phosphate cytidylyltransferase. Residues 248-406 (FIGMGFDTHA…HVSMRYKQKL (159 aa)) are 2-C-methyl-D-erythritol 2,4-cyclodiphosphate synthase. A divalent metal cation is bound by residues aspartate 254 and histidine 256. Residues 254 to 256 (DTH) and 280 to 281 (HS) contribute to the 4-CDP-2-C-methyl-D-erythritol 2-phosphate site. Histidine 288 contacts a divalent metal cation. 4-CDP-2-C-methyl-D-erythritol 2-phosphate contacts are provided by residues 302-304 (DIG), 307-311 (FPDND), 378-381 (TTME), phenylalanine 385, and lysine 388.

This sequence in the N-terminal section; belongs to the IspD/TarI cytidylyltransferase family. IspD subfamily. It in the C-terminal section; belongs to the IspF family. A divalent metal cation serves as cofactor.

The catalysed reaction is 2-C-methyl-D-erythritol 4-phosphate + CTP + H(+) = 4-CDP-2-C-methyl-D-erythritol + diphosphate. The enzyme catalyses 4-CDP-2-C-methyl-D-erythritol 2-phosphate = 2-C-methyl-D-erythritol 2,4-cyclic diphosphate + CMP. Its pathway is isoprenoid biosynthesis; isopentenyl diphosphate biosynthesis via DXP pathway; isopentenyl diphosphate from 1-deoxy-D-xylulose 5-phosphate: step 2/6. It participates in isoprenoid biosynthesis; isopentenyl diphosphate biosynthesis via DXP pathway; isopentenyl diphosphate from 1-deoxy-D-xylulose 5-phosphate: step 4/6. Functionally, bifunctional enzyme that catalyzes the formation of 4-diphosphocytidyl-2-C-methyl-D-erythritol from CTP and 2-C-methyl-D-erythritol 4-phosphate (MEP) (IspD), and catalyzes the conversion of 4-diphosphocytidyl-2-C-methyl-D-erythritol 2-phosphate (CDP-ME2P) to 2-C-methyl-D-erythritol 2,4-cyclodiphosphate (ME-CPP) with a corresponding release of cytidine 5-monophosphate (CMP) (IspF). This chain is Bifunctional enzyme IspD/IspF, found in Helicobacter pylori (strain G27).